We begin with the raw amino-acid sequence, 505 residues long: 2,3-bisphosphoglycerate-independent phosphoglycerate mutase (505 aa).

Mn(2+) is bound by residues D11 and S61. S61 functions as the Phosphoserine intermediate in the catalytic mechanism. Substrate contacts are provided by residues H122, 152–153 (RD), R183, R189, 259–262 (RTDR), and K332. Positions 399, 403, 440, 441, and 458 each coordinate Mn(2+).

It belongs to the BPG-independent phosphoglycerate mutase family. As to quaternary structure, monomer. The cofactor is Mn(2+).

It carries out the reaction (2R)-2-phosphoglycerate = (2R)-3-phosphoglycerate. It functions in the pathway carbohydrate degradation; glycolysis; pyruvate from D-glyceraldehyde 3-phosphate: step 3/5. In terms of biological role, catalyzes the interconversion of 2-phosphoglycerate and 3-phosphoglycerate. In Flavobacterium psychrophilum (strain ATCC 49511 / DSM 21280 / CIP 103535 / JIP02/86), this protein is 2,3-bisphosphoglycerate-independent phosphoglycerate mutase.